A 446-amino-acid polypeptide reads, in one-letter code: Butyryl-CoA:acetate CoA-transferase (446 aa).

220-224 is a binding site for CoA; that stretch reads GIGGM. The active-site 5-glutamyl coenzyme A thioester intermediate is the Glu-245. CoA-binding residues include Val-320, Gly-343, and Lys-370.

It belongs to the acetyl-CoA hydrolase/transferase family. Butyryl-CoA CoA-transferase subfamily.

It catalyses the reaction butanoate + acetyl-CoA = butanoyl-CoA + acetate. The enzyme catalyses propanoate + acetyl-CoA = propanoyl-CoA + acetate. It functions in the pathway lipid metabolism; butanoate metabolism. Functionally, coenzyme A-transferase that converts butyryl-CoA to butyrate. Can also use proprionyl-CoA as substrate in vitro. The polypeptide is Butyryl-CoA:acetate CoA-transferase (Anaerostipes caccae (strain DSM 14662 / CCUG 47493 / JCM 13470 / NCIMB 13811 / L1-92)).